The chain runs to 404 residues: Ubiquitin-like modifier-activating enzyme 5 (404 aa).

At serine 45 the chain carries Phosphoserine. ATP contacts are provided by glycine 83, aspartate 104, lysine 127, asparagine 150, and asparagine 184. Cysteine 226 and cysteine 229 together coordinate Zn(2+). The active-site Glycyl thioester intermediate is the cysteine 250. 2 residues coordinate Zn(2+): cysteine 303 and cysteine 308. Residues 334–346 (IIHEDNEWGIELV) carry the UFM1-interacting sequence (UIS) motif. The tract at residues 347–377 (SEISEEELKKSSGPIPDLPEGIIVAYTVPQK) is linker. 2 positions are modified to phosphoserine: serine 358 and serine 393. A UFC1-binding sequence (UFC) motif is present at residues 389 to 404 (DSGESLEDLMAKMKNI).

The protein belongs to the ubiquitin-activating E1 family. UBA5 subfamily. Homodimer; homodimerization is required for UFM1 activation. Interacts (via UIS motif) with UFM1; binds UFM1 via a trans-binding mechanism in which UFM1 interacts with distinct sites in both subunits of the UBA5 homodimer. Interacts (via C-terminus) with UFC1. Interacts (via UIS motif) with GABARAPL2 and, with lower affinity, with GABARAP and GABARAPL1.

It is found in the cytoplasm. The protein localises to the nucleus. Its subcellular location is the endoplasmic reticulum membrane. The protein resides in the golgi apparatus. Its function is as follows. E1-like enzyme which specifically catalyzes the first step in ufmylation. Activates UFM1 by first adenylating its C-terminal glycine residue with ATP, and thereafter linking this residue to the side chain of a cysteine residue in E1, yielding a UFM1-E1 thioester and free AMP. Activates UFM1 via a trans-binding mechanism, in which UFM1 interacts with distinct sites in both subunits of the UBA5 homodimer. Trans-binding also promotes stabilization of the UBA5 homodimer, and enhances ATP-binding. Transfer of UFM1 from UBA5 to the E2-like enzyme UFC1 also takes place using a trans mechanism. Ufmylation plays a key role in various processes, such as ribosome recycling, response to DNA damage, interferon response or reticulophagy (also called ER-phagy). Ufmylation is essential for erythroid differentiation of both megakaryocytes and erythrocytes. The polypeptide is Ubiquitin-like modifier-activating enzyme 5 (Bos taurus (Bovine)).